Here is a 426-residue protein sequence, read N- to C-terminus: MLKLNLEGIYNFLDWRKHTQTYAPQIKSIHQKLHQDKQLKEKYLGWLELPLHFDFKEIEKMKQLKNFHPNLDVLVVIGIGGSYLGAKAGIEFLQTPFKKTKPEILFAGHQVSGNYLTNLLHFLKNKNWAINVISKSGTTLEPALAFRILKKEIEEKYGKQLAKNRIFVTTDSQKGVLLNLALKEGYQTFVIPDSVGGRFSVFTSVGILPFVFANLDVASMMKGALQSYHDTFQEDLLQNQAYKYALARYLFHTQQNKKMEILVSYEPNLLSFSEWWKQLFAESEGKEEKGLFVGATNNSTDLHSLGQFIQEGTKMLFETVLNVSSIKDDCVVPHILNELDNLNYVAGKTYSQINQKILQATRQAHIEGKVPNLEIVIPTLDAYHFGYLAYFFQKACAMSGLLLGINPFNQHGVEIYKQKMFALLKP.

E282 acts as the Proton donor in catalysis. Residues H303 and K417 contribute to the active site.

This sequence belongs to the GPI family.

The protein localises to the cytoplasm. It catalyses the reaction alpha-D-glucose 6-phosphate = beta-D-fructose 6-phosphate. It participates in carbohydrate biosynthesis; gluconeogenesis. It functions in the pathway carbohydrate degradation; glycolysis; D-glyceraldehyde 3-phosphate and glycerone phosphate from D-glucose: step 2/4. Catalyzes the reversible isomerization of glucose-6-phosphate to fructose-6-phosphate. The sequence is that of Glucose-6-phosphate isomerase from Aster yellows witches'-broom phytoplasma (strain AYWB).